The primary structure comprises 262 residues: Hydroxyethylthiazole kinase (262 aa).

Met50 provides a ligand contact to substrate. The ATP site is built by Arg125 and Thr171. Gly198 serves as a coordination point for substrate.

Belongs to the Thz kinase family. Mg(2+) is required as a cofactor.

The catalysed reaction is 5-(2-hydroxyethyl)-4-methylthiazole + ATP = 4-methyl-5-(2-phosphooxyethyl)-thiazole + ADP + H(+). It functions in the pathway cofactor biosynthesis; thiamine diphosphate biosynthesis; 4-methyl-5-(2-phosphoethyl)-thiazole from 5-(2-hydroxyethyl)-4-methylthiazole: step 1/1. In terms of biological role, catalyzes the phosphorylation of the hydroxyl group of 4-methyl-5-beta-hydroxyethylthiazole (THZ). The protein is Hydroxyethylthiazole kinase of Escherichia coli O81 (strain ED1a).